Reading from the N-terminus, the 443-residue chain is MREIVHIQGGQCGNQIGAKFWEVVSDEHGIDPTGTYHGDSDLQLERINVYFNEATGGRYVPRAILMDLEPGTMDSVRSGPYGQIFRPDNFVFGQTGAGNNWAKGHYTEGAELIDSVLDVVRKEAESCDCLQGFQVCHSLGGGTGSGMGTLLISKIREEYPDRMMLTFSVVPSPKVSDTVVEPYNATLSVHQLVENADECMVLDNEALYDICFRTLKLTTPTFGDLNHLISAVMSGITCCLRFPGQLNADLRKLAVNLIPFPRLHFFMVGFTPLTSRGSQQYRALTVPELTQQMWDAKNMMCAADPRHGRYLTASALFRGRMSTKEVDEQMLNVQNKNSSYFVEWIPNNVKSSVCDIPPKGLKMSATFIGNSTAIQEMFKRVSEQFTAMFRRKAFLHWYTGEGMDEMEFTEAESNMNDLVSEYQQYQDASAEEEGEFEGEEEEA.

Residues Q11, E69, S138, G142, T143, G144, N204, and N226 each coordinate GTP. Residue E69 coordinates Mg(2+). Positions 424–443 (QYQDASAEEEGEFEGEEEEA) are disordered. A compositionally biased stretch (acidic residues) spans 429 to 443 (SAEEEGEFEGEEEEA).

This sequence belongs to the tubulin family. In terms of assembly, dimer of alpha and beta chains. A typical microtubule is a hollow water-filled tube with an outer diameter of 25 nm and an inner diameter of 15 nM. Alpha-beta heterodimers associate head-to-tail to form protofilaments running lengthwise along the microtubule wall with the beta-tubulin subunit facing the microtubule plus end conferring a structural polarity. Microtubules usually have 13 protofilaments but different protofilament numbers can be found in some organisms and specialized cells. Mg(2+) serves as cofactor.

It localises to the cytoplasm. It is found in the cytoskeleton. Functionally, tubulin is the major constituent of microtubules, a cylinder consisting of laterally associated linear protofilaments composed of alpha- and beta-tubulin heterodimers. Microtubules grow by the addition of GTP-tubulin dimers to the microtubule end, where a stabilizing cap forms. Below the cap, tubulin dimers are in GDP-bound state, owing to GTPase activity of alpha-tubulin. The protein is Tubulin beta-1/beta-2 chain (TUBB1) of Chlamydomonas reinhardtii (Chlamydomonas smithii).